A 377-amino-acid polypeptide reads, in one-letter code: Methylthioribose-1-phosphate isomerase (377 aa).

The active-site Proton donor is Asp-254.

It belongs to the eIF-2B alpha/beta/delta subunits family. MtnA subfamily.

Its subcellular location is the cytoplasm. The protein resides in the nucleus. The catalysed reaction is 5-(methylsulfanyl)-alpha-D-ribose 1-phosphate = 5-(methylsulfanyl)-D-ribulose 1-phosphate. It functions in the pathway amino-acid biosynthesis; L-methionine biosynthesis via salvage pathway; L-methionine from S-methyl-5-thio-alpha-D-ribose 1-phosphate: step 1/6. Its function is as follows. Catalyzes the interconversion of methylthioribose-1-phosphate (MTR-1-P) into methylthioribulose-1-phosphate (MTRu-1-P). In Aspergillus terreus (strain NIH 2624 / FGSC A1156), this protein is Methylthioribose-1-phosphate isomerase (mri1).